Here is a 688-residue protein sequence, read N- to C-terminus: Translation initiation factor IF-2 (688 aa).

The interval 62-103 (EFEVEEKVVRSKKNSNKKKKKGKGNEDKRQDNFAGRQQTQIV) is disordered. Residues 71-83 (RSKKNSNKKKKKG) are compositionally biased toward basic residues. In terms of domain architecture, tr-type G spans 190–359 (ERPAVVTIMG…LLVSEVEEYK (170 aa)). The tract at residues 199-206 (GHVDHGKT) is G1. 199-206 (GHVDHGKT) provides a ligand contact to GTP. Residues 224–228 (GITQH) are G2. Residues 245–248 (DTPG) form a G3 region. Residues 245–249 (DTPGH) and 299–302 (NKMD) contribute to the GTP site. Residues 299-302 (NKMD) form a G4 region. The tract at residues 335–337 (SAI) is G5.

It belongs to the TRAFAC class translation factor GTPase superfamily. Classic translation factor GTPase family. IF-2 subfamily.

The protein localises to the cytoplasm. Its function is as follows. One of the essential components for the initiation of protein synthesis. Protects formylmethionyl-tRNA from spontaneous hydrolysis and promotes its binding to the 30S ribosomal subunits. Also involved in the hydrolysis of GTP during the formation of the 70S ribosomal complex. The chain is Translation initiation factor IF-2 from Bacillus cereus (strain G9842).